A 513-amino-acid polypeptide reads, in one-letter code: MQLNSNEIAELIKQRIEKFEVTSEARNEGTIMSVQDGIIRIHGLADCLQGEMVELPGNRYAIALNLERDSVGAVVMGPYADLQEGTKVKSTGRILEVPVGEKLLGRVVNTLGQPIDGKGPIEADGYEPVEKIAPGVIERQSVDQPVQTGYKSIDSMIPVGRGQRELIIGDRQTGKTALAVDAIINQKDSGIKCVYVAIGQKNSTISAVVRKLEEHGAMENTIVVAASASESAALQYLAAYSGCTMGEYFRDRGEDALIVYDDLSKQAVAYRQISLLLRRPPGREAFPGDVFYLHSRLLERAARVNADYVEKFTDGKVKGQTGSLTALPIIETQAGDVSAFVPTNVISITDGQIFLETDLFNSGIRPAVNAGVSVSRVGGSAQTKIIKKLGGGIRLALAQYRELAAFAQFASDLDESTRSQLEHGQRVTELMKQKQYKPMSVAQMAVSIYAVEKGFLKDVEIDKIMDFEESLQSFMASEYAELMAEIDKTGNYNDDIDAQLKAALEKFKQTQSW.

Residue 169–176 (GDRQTGKT) participates in ATP binding.

The protein belongs to the ATPase alpha/beta chains family. F-type ATPases have 2 components, CF(1) - the catalytic core - and CF(0) - the membrane proton channel. CF(1) has five subunits: alpha(3), beta(3), gamma(1), delta(1), epsilon(1). CF(0) has three main subunits: a(1), b(2) and c(9-12). The alpha and beta chains form an alternating ring which encloses part of the gamma chain. CF(1) is attached to CF(0) by a central stalk formed by the gamma and epsilon chains, while a peripheral stalk is formed by the delta and b chains.

The protein localises to the cell inner membrane. It carries out the reaction ATP + H2O + 4 H(+)(in) = ADP + phosphate + 5 H(+)(out). In terms of biological role, produces ATP from ADP in the presence of a proton gradient across the membrane. The alpha chain is a regulatory subunit. This Idiomarina loihiensis (strain ATCC BAA-735 / DSM 15497 / L2-TR) protein is ATP synthase subunit alpha.